The sequence spans 84 residues: Putative pelota-like protein YCL001W-B (84 aa).

The protein belongs to the eukaryotic release factor 1 family. Pelota subfamily. Highly divergent.

In Saccharomyces cerevisiae (strain ATCC 204508 / S288c) (Baker's yeast), this protein is Putative pelota-like protein YCL001W-B.